Reading from the N-terminus, the 194-residue chain is Peptidyl-tRNA hydrolase (194 aa).

A tRNA-binding site is contributed by tyrosine 16. Histidine 21 serves as the catalytic Proton acceptor. TRNA-binding residues include phenylalanine 67, asparagine 69, and asparagine 115.

It belongs to the PTH family. As to quaternary structure, monomer.

It localises to the cytoplasm. It carries out the reaction an N-acyl-L-alpha-aminoacyl-tRNA + H2O = an N-acyl-L-amino acid + a tRNA + H(+). Hydrolyzes ribosome-free peptidyl-tRNAs (with 1 or more amino acids incorporated), which drop off the ribosome during protein synthesis, or as a result of ribosome stalling. Functionally, catalyzes the release of premature peptidyl moieties from peptidyl-tRNA molecules trapped in stalled 50S ribosomal subunits, and thus maintains levels of free tRNAs and 50S ribosomes. This Colwellia psychrerythraea (strain 34H / ATCC BAA-681) (Vibrio psychroerythus) protein is Peptidyl-tRNA hydrolase.